Consider the following 295-residue polypeptide: Protoheme IX farnesyltransferase (295 aa).

9 helical membrane-spanning segments follow: residues 8–28 (VTKP…FLLA), 35–55 (YPLF…GCVF), 74–94 (VLVK…VLGI), 98–118 (LLLY…GFVI), 132–152 (VYGT…GYCA), 162–182 (LILL…IAIF), 208–228 (ITLY…SGYA), 233–253 (LVVA…GYKA), and 264–284 (FVFS…DFNV).

This sequence belongs to the UbiA prenyltransferase family. Protoheme IX farnesyltransferase subfamily.

The protein localises to the cell inner membrane. The enzyme catalyses heme b + (2E,6E)-farnesyl diphosphate + H2O = Fe(II)-heme o + diphosphate. Its pathway is porphyrin-containing compound metabolism; heme O biosynthesis; heme O from protoheme: step 1/1. Its function is as follows. Converts heme B (protoheme IX) to heme O by substitution of the vinyl group on carbon 2 of heme B porphyrin ring with a hydroxyethyl farnesyl side group. The sequence is that of Protoheme IX farnesyltransferase from Yersinia pseudotuberculosis serotype O:1b (strain IP 31758).